The primary structure comprises 355 residues: UDP-galactose translocator 1 (355 aa).

The interval 1–36 (MKFQNVHISHQDEDKEKLLPNDKDVEKADESPSSSR) is disordered. Basic and acidic residues predominate over residues 9–30 (SHQDEDKEKLLPNDKDVEKADE). 6 helical membrane-spanning segments follow: residues 40–60 (VFKCYVIASMTFIWTAYTLTI), 177–197 (WMAITLLMFGVAFVQMNNVSA), 211–231 (IVGLSAVLATCVTAGFAGVYF), 282–302 (VWAVVILLGVGGLYISLVMRY), 309–329 (SMASAVSIILVVVLSMLIFPD), and 330–350 (IFIGMYFVLGTICVVLAVLLY).

Belongs to the nucleotide-sugar transporter family. SLC35A subfamily.

Its subcellular location is the membrane. The protein localises to the cytoplasmic granule membrane. This Caenorhabditis elegans protein is UDP-galactose translocator 1 (ugtp-1).